The primary structure comprises 1253 residues: Structural polyprotein (1253 aa).

Residues 43–77 (VQAQQMQQLISAVSALTTKQNGKAPKKPKKKPQKA) form a host transcription inhibition region. A disordered region spans residues 58-110 (LTTKQNGKAPKKPKKKPQKAKAKKNEQQKKNENKKPPPKQKNPAKKKKPGKRE). Over residues 66 to 79 (APKKPKKKPQKAKA) the composition is skewed to basic residues. The Nuclear localization signal motif lies at 70-106 (PKKKPQKAKAKKNEQQKKNENKKPPPKQKNPAKKKKP). Basic and acidic residues predominate over residues 80–92 (KKNEQQKKNENKK). A binding to the viral RNA region spans residues 90–121 (NKKPPPKQKNPAKKKKPGKRERMCMKIENDCI). Residues 93-108 (PPPKQKNPAKKKKPGK) are compositionally biased toward basic residues. Positions 106–120 (PGKRERMCMKIENDC) are ribosome-binding. Cysteine 120 and cysteine 135 are oxidised to a cystine. Residues 120-268 (CIFEVKLDGK…RYTPEGTEEW (149 aa)) form the Peptidase S3 domain. Histidine 146 functions as the Charge relay system in the catalytic mechanism. The Nuclear export signal signature appears at 151–161 (IDNPDLAKLTY). Residues 162-167 (KKSSKY) are interaction with spike glycoprotein E2. Aspartate 168 functions as the Charge relay system in the catalytic mechanism. The interval 190-200 (PEGHYNWHHGA) is dimerization of the capsid protein. Serine 220 serves as the catalytic Charge relay system. A dimerization of the capsid protein region spans residues 226-230 (DNKGR). The tract at residues 269–280 (SAALMMCVLANV) is functions as an uncleaved signal peptide for the precursor of protein E3/E2. 3 disulfides stabilise this stretch: cysteine 275–cysteine 284, cysteine 289–cysteine 293, and cysteine 292–cysteine 324. Asparagine 279 carries N-linked (GlcNAc...) asparagine; by host glycosylation. Asparagine 325 is a glycosylation site (N-linked (GlcNAc...) asparagine; by host). Residues 333–694 (SVTKHFNVYK…EIILYYYGLY (362 aa)) lie on the Extracellular side of the membrane. Cystine bridges form between cysteine 351–cysteine 457, cysteine 354–cysteine 360, cysteine 423–cysteine 437, cysteine 485–cysteine 597, cysteine 533–cysteine 557, and cysteine 535–cysteine 552. Interaction with host Mxra8 receptor stretches follow at residues 358 to 361 (QFCY) and 394 to 396 (HEH). Positions 516–519 (QSGN) are interaction with host Mxra8 receptor. N-linked (GlcNAc...) asparagine; by host glycosylation occurs at asparagine 532. Positions 548-554 (TINSCKI) are interaction with host Mxra8 receptor. Residue asparagine 594 is glycosylated (N-linked (GlcNAc...) asparagine; by host). A helical transmembrane segment spans residues 695–715 (PAATIAAVSAAGLAVVLSLLA). Residues 716-754 (SCYMFATARRKCLTPYALTPGAVVPVTLGVLCCAPRAHA) lie on the Cytoplasmic side of the membrane. Cysteine 717 carries S-stearoyl cysteine; by host lipidation. Residues 722–726 (TARRK) are interaction with the capsid protein. Residue cysteine 727 is the site of S-stearoyl cysteine; by host attachment. Residues 727-747 (CLTPYALTPGAVVPVTLGVLC) form a transient transmembrane before p62-6K protein processing region. Cysteine 727 and cysteine 748 are oxidised to a cystine. S-palmitoyl cysteine; by host attachment occurs at residues cysteine 747 and cysteine 748. Topologically, residues 755-769 (ASFAESMAYLWDENQ) are extracellular. N-linked (GlcNAc...) asparagine; by host glycosylation occurs at asparagine 768. Residues 770 to 790 (TLFWLELATPLAAIIILVCCL) form a helical membrane-spanning segment. Topologically, residues 791 to 792 (KN) are cytoplasmic. The helical transmembrane segment at 793–813 (LLCCCKPLSFLVLVSLGTPVV) threads the bilayer. 2 consecutive stretches face the extracellular side: residues 814 to 815 (KS) and 826 to 1227 (VGFP…WVQR). 4 disulfide bridges follow: cysteine 864/cysteine 929, cysteine 877/cysteine 909, cysteine 878/cysteine 911, and cysteine 883/cysteine 893. Positions 899–916 (VYPFMWGGAYCFCDTENT) are E1 fusion peptide loop. 2 N-linked (GlcNAc...) asparagine; by host glycosylation sites follow: asparagine 956 and asparagine 1085. 4 disulfide bridges follow: cysteine 1074-cysteine 1086, cysteine 1116-cysteine 1191, cysteine 1121-cysteine 1195, and cysteine 1143-cysteine 1185. The helical transmembrane segment at 1228-1248 (VAGGLGGLTLAAVAVLILVTC) threads the bilayer. The S-palmitoyl cysteine; by host moiety is linked to residue cysteine 1248. Residues 1249-1253 (VTMRR) lie on the Cytoplasmic side of the membrane.

As to quaternary structure, homodimer. Homomultimer. Interacts with host karyopherin KPNA4; this interaction allows the nuclear import of the viral capsid protein. Interacts with spike glycoprotein E2. Interacts with host IRAK1; the interaction leads to inhibition of IRAK1-dependent signaling. In terms of assembly, the precursor of protein E3/E2 and E1 form a heterodimer shortly after synthesis. Interacts with spike glycoprotein E2. The precursor of protein E3/E2 and E1 form a heterodimer shortly after synthesis. Processing of the precursor of protein E3/E2 into E2 and E3 results in a heterodimer of the spike glycoproteins E2 and E1. Spike at virion surface are constituted of a trimer of E2-E1 heterodimers. After target cell attachment and endocytosis, E1 change conformation to form homotrimers. Interacts with 6K protein. E1/E2 heterodimer interacts with host LDLR. As to quaternary structure, interacts with spike glycoprotein E1. Processing of the precursor of protein E3/E2 into E2 and E3 results in a heterodimer of the spike glycoproteins E2 and E1. Spike at virion surface are constituted of a trimer of E2-E1 heterodimers. Interacts with 6K protein. Interacts with host MXRA8; this interaction mediates virus entry. In terms of assembly, oligomer. Interacts with spike glycoprotein E1. Interacts with spike glycoprotein E2. Post-translationally, structural polyprotein: Specific enzymatic cleavages in vivo yield mature proteins. Capsid protein is auto-cleaved during polyprotein translation, unmasking a signal peptide at the N-terminus of the precursor of E3/E2. The remaining polyprotein is then targeted to the host endoplasmic reticulum, where host signal peptidase cleaves it into pE2, 6K and E1 proteins. pE2 is further processed to mature E3 and E2 by host furin in trans-Golgi vesicle. In terms of processing, palmitoylated via thioester bonds. These palmitoylations may induce disruption of the C-terminus transmembrane. This would result in the reorientation of E2 C-terminus from lumenal to cytoplasmic side. N-glycosylated. Post-translationally, palmitoylated via thioester bonds.

The protein resides in the virion. It is found in the host cytoplasm. It localises to the host cell membrane. The protein localises to the host nucleus. Its subcellular location is the virion membrane. The protein resides in the host Golgi apparatus. It is found in the host trans-Golgi network. It localises to the host endoplasmic reticulum. It catalyses the reaction Autocatalytic release of the core protein from the N-terminus of the togavirus structural polyprotein by hydrolysis of a -Trp-|-Ser- bond.. In terms of biological role, forms an icosahedral capsid with a T=4 symmetry composed of 240 copies of the capsid protein surrounded by a lipid membrane through which penetrate 80 spikes composed of trimers of E1-E2 heterodimers. The capsid protein binds to the viral RNA genome at a site adjacent to a ribosome binding site for viral genome translation following genome release. Possesses a protease activity that results in its autocatalytic cleavage from the nascent structural protein. Following its self-cleavage, the capsid protein transiently associates with ribosomes, and within several minutes the protein binds to viral RNA and rapidly assembles into icosahedric core particles. The resulting nucleocapsid eventually associates with the cytoplasmic domain of the spike glycoprotein E2 at the cell membrane, leading to budding and formation of mature virions. In case of infection, new virions attach to target cells and after clathrin-mediated endocytosis their membrane fuses with the host endosomal membrane. This leads to the release of the nucleocapsid into the cytoplasm, followed by an uncoating event necessary for the genomic RNA to become accessible. The uncoating might be triggered by the interaction of capsid proteins with ribosomes. Binding of ribosomes would release the genomic RNA since the same region is genomic RNA-binding and ribosome-binding. Specifically inhibits interleukin-1 receptor-associated kinase 1/IRAK1-dependent signaling during viral entry, representing a means by which the alphaviruses may evade innate immune detection and activation prior to viral gene expression. Provides the signal sequence for the translocation of the precursor of protein E3/E2 to the host endoplasmic reticulum. Furin-cleaved E3 remains associated with spike glycoprotein E1 and mediates pH protection of the latter during the transport via the secretory pathway. After virion release from the host cell, the assembly protein E3 is gradually released in the extracellular space. Its function is as follows. Plays a role in viral attachment to target host cell, by binding to the cell receptor MXRA8. The host LDLR may also act as a cell receptor for viral entry. Synthesized as a p62 precursor which is processed by furin at the cell membrane just before virion budding, giving rise to E2-E1 heterodimer. The p62-E1 heterodimer is stable, whereas E2-E1 is unstable and dissociate at low pH. p62 is processed at the last step, presumably to avoid E1 fusion activation before its final export to cell surface. E2 C-terminus contains a transitory transmembrane that would be disrupted by palmitoylation, resulting in reorientation of the C-terminal tail from lumenal to cytoplasmic side. This step is critical since E2 C-terminus is involved in budding by interacting with capsid proteins. This release of E2 C-terminus in cytoplasm occurs lately in protein export, and precludes premature assembly of particles at the endoplasmic reticulum membrane. Functionally, acts as a viroporin that participates in virus glycoprotein processing and transport to the plasma membrane, cell permeabilization and budding of viral particles. Disrupts the calcium homeostasis of the cell, probably at the endoplasmic reticulum level. This leads to cytoplasmic calcium elevation. Because of its lipophilic properties, the 6K protein is postulated to influence the selection of lipids that interact with the transmembrane domains of the glycoproteins, which, in turn, affects the deformability of the bilayer required for the extreme curvature that occurs as budding proceeds. Present in low amount in virions, about 3% compared to viral glycoproteins. In terms of biological role, class II viral fusion protein. Fusion activity is inactive as long as E1 is bound to E2 in mature virion. After virus attachment to target cell via host MXRA8 and endocytosis, acidification of the endosome induce dissociation of E1/E2 heterodimer and concomitant trimerization of the E1 subunits. This E1 trimer is fusion active, and promotes release of viral nucleocapsid in cytoplasm after endosome and viral membrane fusion. Efficient fusion requires the presence of cholesterol and sphingolipid in the target membrane. The chain is Structural polyprotein from Aedes vexans (Inland floodwater mosquito).